A 423-amino-acid polypeptide reads, in one-letter code: Protein CLP1 homolog (423 aa).

ATP is bound by residues E19, K60, and 122 to 127 (DVGKTT).

The protein belongs to the Clp1 family. Clp1 subfamily.

The protein localises to the nucleus. In terms of biological role, required for endonucleolytic cleavage during polyadenylation-dependent pre-mRNA 3'-end formation. The polypeptide is Protein CLP1 homolog (cbc) (Anopheles gambiae (African malaria mosquito)).